The following is a 656-amino-acid chain: Methionine--tRNA ligase (656 aa).

A 'HIGH' region motif is present at residues 11–21; sequence YYVNDIPHIGH. Positions 126, 129, 147, and 150 each coordinate Zn(2+). A 'KMSKS' region motif is present at residues 301 to 305; that stretch reads KMSKS. Lys304 contacts ATP. Residues 555-656 enclose the tRNA-binding domain; that stretch reads DFKKVEIKVG…REKIAGSLIS (102 aa).

It belongs to the class-I aminoacyl-tRNA synthetase family. MetG type 2A subfamily. As to quaternary structure, homodimer. The cofactor is Zn(2+).

The protein localises to the cytoplasm. The catalysed reaction is tRNA(Met) + L-methionine + ATP = L-methionyl-tRNA(Met) + AMP + diphosphate. Its function is as follows. Is required not only for elongation of protein synthesis but also for the initiation of all mRNA translation through initiator tRNA(fMet) aminoacylation. The sequence is that of Methionine--tRNA ligase (metG) from Helicobacter pylori (strain J99 / ATCC 700824) (Campylobacter pylori J99).